Reading from the N-terminus, the 43-residue chain is Potassium channel toxin gamma-KTx 4.2 (43 aa).

4 cysteine pairs are disulfide-bonded: Cys5–Cys23, Cys11–Cys34, Cys20–Cys39, and Cys24–Cys41.

Belongs to the ergtoxin family. Gamma-KTx 4 subfamily. In terms of tissue distribution, expressed by the venom gland.

The protein localises to the secreted. Its function is as follows. Reversibly blocks Kv11/ERG potassium channels. The chain is Potassium channel toxin gamma-KTx 4.2 from Centruroides noxius (Mexican scorpion).